Here is a 430-residue protein sequence, read N- to C-terminus: C-terminal-binding protein 1 (430 aa).

The segment at 1–59 (MSGVRPPIMNGPMHPRPLVALLDGRDCTVEMPILKDVATVAFCDAQSTQEIHEKVLNEA) is interaction with GLIS2 1. NAD(+) contacts are provided by residues S89, 169-174 (IGLGRV), D193, 226-232 (CGLNEHN), 253-255 (TAR), and D279. R255 is an active-site residue. The segment at 277–349 (ALDVHESEPF…VNKDHLTAAT (73 aa)) is interaction with GLIS2 2. E284 is a catalytic residue. S289 carries the post-translational modification Phosphoserine. Catalysis depends on H304, which acts as the Proton donor. The interval 398 to 430 (SHGLPPVAHPPHAPSPGQTVKPEADRDHTTDQL) is disordered. S412 carries the phosphoserine modification. A Glycyl lysine isopeptide (Lys-Gly) (interchain with G-Cter in SUMO) cross-link involves residue K418. Over residues 419-430 (PEADRDHTTDQL) the composition is skewed to basic and acidic residues.

Belongs to the D-isomer specific 2-hydroxyacid dehydrogenase family. Homo- or heterodimer. Heterodimer with CTBP2. Interacts with ELK3 (via its PXDLS motif). Interacts with RBBP8 (via its PXDLS motif); the interaction is disrupted by binding to adenovirus E1A. Interacts with PNN, MECOM and ZFHX1B. Interacts with ZNF366 (via PXDLS motif). Interaction with SATB1 (non-acetylated form); the interaction stabilizes its attachment to DNA and promotes transcription repression. Interacts with PRDM16; the interaction represses white adipose tissue (WAT)-specific genes expression. Interacts with GLIS2, HIPK2, FOXP1, FOXP2, HDAC4, HDAC5, HDAC9, NRIP1 and WIZ. Interacts with ZNF217. Interacts with BCL6; the interaction is required for BCL6 transcriptional autoinhibition and inhibition of some BCL6 target genes. Interacts with IKZF4. Interacts with MCRIP1 (unphosphorylated form, via the PXDLS motif); competitively inhibiting CTBP-ZEB1 interaction. Interacts with Bassoon/BSN; this interaction targets and anchors CTBP1 to presynapses. Interacts with SIMC1. It depends on NAD(+) as a cofactor. In terms of processing, the level of phosphorylation appears to be regulated during the cell cycle. Phosphorylation by HIPK2 on Ser-412 induces proteasomal degradation. Post-translationally, ADP-ribosylated; when cells are exposed to brefeldin A. Sumoylation on Lys-418 is promoted by the E3 SUMO-protein ligase CBX4.

Its subcellular location is the cytoplasm. The protein resides in the nucleus. The protein localises to the synapse. It is found in the synaptosome. Functionally, corepressor targeting diverse transcription regulators such as GLIS2 or BCL6. Has dehydrogenase activity. Involved in controlling the equilibrium between tubular and stacked structures in the Golgi complex. Functions in brown adipose tissue (BAT) differentiation. The chain is C-terminal-binding protein 1 (Ctbp1) from Rattus norvegicus (Rat).